Here is a 144-residue protein sequence, read N- to C-terminus: Small ribosomal subunit protein bS6 (144 aa).

The interval 95 to 144 (PVTTPSPMMQDDKSKPDENSRGTAAPTVNVADDSASGAQVVAAEENDTQS) is disordered. Residues 104 to 114 (QDDKSKPDENS) show a composition bias toward basic and acidic residues.

Belongs to the bacterial ribosomal protein bS6 family.

Its function is as follows. Binds together with bS18 to 16S ribosomal RNA. This is Small ribosomal subunit protein bS6 from Nitrosomonas eutropha (strain DSM 101675 / C91 / Nm57).